Reading from the N-terminus, the 557-residue chain is BZIP-type transcription factor MBZ1 (557 aa).

Low complexity predominate over residues 171 to 194; it reads AKAQAQQRQQQQQQQLIQQTQRQT. Disordered stretches follow at residues 171 to 209 and 221 to 273; these read AKAQ…TDPI and MRAK…RQLR. Residues 229–240 show a composition bias toward polar residues; sequence EPESQSVLNNLP. Basic and acidic residues predominate over residues 254 to 271; sequence RLLASEEGKKLSSKERRQ. In terms of domain architecture, bZIP spans 264-327; sequence LSSKERRQLR…KRLSDLTRML (64 aa). Positions 267–286 are basic motif; it reads KERRQLRNKVSARAFRSRRK. The segment at 289 to 296 is leucine-zipper; that stretch reads ISQLEAEI. The disordered stretch occupies residues 344-364; it reads PTGLPQGSPVKIEQNPQQEQN.

Its subcellular location is the nucleus. In terms of biological role, BZIP-type transcription factor that functions as either an activator or a suppressor, and which contributes to the regulation of fungal growth, conidiation, cell wall integrity, and virulence. Plays a key role in virulence against insects by mediating cell wall integrity, cell surface hydrophobicity, and adherence to hydrophobic surfaces. Exhibits negative regulation of subtilisin proteases, but positive control of an adhesin gene. This chain is BZIP-type transcription factor MBZ1, found in Metarhizium robertsii (strain ARSEF 23 / ATCC MYA-3075) (Metarhizium anisopliae (strain ARSEF 23)).